We begin with the raw amino-acid sequence, 150 residues long: uncharacterized protein (150 aa).

The tract at residues lysine 49–alanine 88 is disordered. Positions phenylalanine 63–aspartate 75 are enriched in basic and acidic residues.

This is an uncharacterized protein from Bacillus subtilis (strain 168).